A 234-amino-acid chain; its full sequence is Phosphoribosylaminoimidazole-succinocarboxamide synthase (234 aa).

This sequence belongs to the SAICAR synthetase family.

The catalysed reaction is 5-amino-1-(5-phospho-D-ribosyl)imidazole-4-carboxylate + L-aspartate + ATP = (2S)-2-[5-amino-1-(5-phospho-beta-D-ribosyl)imidazole-4-carboxamido]succinate + ADP + phosphate + 2 H(+). It functions in the pathway purine metabolism; IMP biosynthesis via de novo pathway; 5-amino-1-(5-phospho-D-ribosyl)imidazole-4-carboxamide from 5-amino-1-(5-phospho-D-ribosyl)imidazole-4-carboxylate: step 1/2. The polypeptide is Phosphoribosylaminoimidazole-succinocarboxamide synthase (Staphylococcus epidermidis (strain ATCC 35984 / DSM 28319 / BCRC 17069 / CCUG 31568 / BM 3577 / RP62A)).